We begin with the raw amino-acid sequence, 342 residues long: Probable alcohol acetyltransferase (342 aa).

Residues 1–38 constitute a mitochondrion transit peptide; sequence MMILGKAGILAQYGTIYVRQNTIRNNLSSCIFKQSLCA. A propeptide spans 39–46 (removed in mature form); that stretch reads FHSLAKVL. The AB hydrolase-1 domain occupies 75–326; sequence PPIIILHGLF…AGHWVNAEKP (252 aa). Residues Ser152 and His319 each act as charge relay system in the active site.

This sequence belongs to the AB hydrolase superfamily. In terms of processing, processed by both the mitochondrial processing peptidase (MPP) and the mitochondrial octapeptidyl aminopeptidase (OCT1).

The protein localises to the mitochondrion. Probable alcohol acetyltransferase that uses acetyl-CoA to synthesize acetate esters from various alcohols. Not involved in the synthesis of ethyl acetate. The chain is Probable alcohol acetyltransferase (IMO32) from Saccharomyces cerevisiae (strain ATCC 204508 / S288c) (Baker's yeast).